Reading from the N-terminus, the 413-residue chain is Cell wall mannoprotein HSP150 (413 aa).

Residues M1–A18 form the signal peptide. Residues A19–R72 constitute a propeptide that is removed on maturation. PIR1/2/3 repeat units follow at residues A73–A89, A97–T115, A116–T134, A140–L158, A164–L182, A188–T206, A207–T225, A226–T244, A245–T263, A264–T282, and Q283–S300.

This sequence belongs to the PIR protein family. Covalently linked to beta-1,3-glucan of the inner cell wall layer via an alkali-sensitive ester linkage between the gamma-carboxyl group of glutamic acids, arising from specific glutamines within the PIR1/2/3 repeats, and hydroxyl groups of glucoses of beta-1,3-glucan chains. In terms of processing, the propeptide is cleaved off in the late Golgi. While both peptides are secreted, only a fraction of the mature glycoprotein is incorporated into the cell wall. Post-translationally, O-glycosylated. Extensively O-mannosylated.

The protein localises to the secreted. It is found in the cell wall. Component of the outer cell wall layer. Required for stability of the cell wall and for optimal growth. Required for resistance against several antifungal and cell wall-perturbing agents and for tolerance to heat shock. In Saccharomyces cerevisiae (strain ATCC 204508 / S288c) (Baker's yeast), this protein is Cell wall mannoprotein HSP150 (HSP150).